The following is a 141-amino-acid chain: Large ribosomal subunit protein uL11 (141 aa).

Belongs to the universal ribosomal protein uL11 family. As to quaternary structure, part of the ribosomal stalk of the 50S ribosomal subunit. Interacts with L10 and the large rRNA to form the base of the stalk. L10 forms an elongated spine to which L12 dimers bind in a sequential fashion forming a multimeric L10(L12)X complex. In terms of processing, one or more lysine residues are methylated.

Forms part of the ribosomal stalk which helps the ribosome interact with GTP-bound translation factors. This is Large ribosomal subunit protein uL11 from Chlorobaculum parvum (strain DSM 263 / NCIMB 8327) (Chlorobium vibrioforme subsp. thiosulfatophilum).